An 818-amino-acid polypeptide reads, in one-letter code: Phenylalanine--tRNA ligase beta subunit (818 aa).

A tRNA-binding domain is found at 39-148; sequence AAELQKFEVA…EDAVVGENFT (110 aa). Residues 423–498 form the B5 domain; the sequence is PQKKPLDFSA…RIYGYDKIES (76 aa). Positions 476, 482, 485, and 486 each coordinate Mg(2+). Positions 724–817 constitute an FDX-ACB domain; the sequence is SDFQANFRDY…IEQKFQGTLR (94 aa).

It belongs to the phenylalanyl-tRNA synthetase beta subunit family. Type 1 subfamily. In terms of assembly, tetramer of two alpha and two beta subunits. The cofactor is Mg(2+).

The protein localises to the cytoplasm. It carries out the reaction tRNA(Phe) + L-phenylalanine + ATP = L-phenylalanyl-tRNA(Phe) + AMP + diphosphate + H(+). This Rickettsia felis (strain ATCC VR-1525 / URRWXCal2) (Rickettsia azadi) protein is Phenylalanine--tRNA ligase beta subunit.